Here is a 358-residue protein sequence, read N- to C-terminus: Probable aminomethyltransferase (358 aa).

It belongs to the GcvT family. As to quaternary structure, the glycine cleavage system is composed of four proteins: P, T, L and H.

The enzyme catalyses N(6)-[(R)-S(8)-aminomethyldihydrolipoyl]-L-lysyl-[protein] + (6S)-5,6,7,8-tetrahydrofolate = N(6)-[(R)-dihydrolipoyl]-L-lysyl-[protein] + (6R)-5,10-methylene-5,6,7,8-tetrahydrofolate + NH4(+). In terms of biological role, the glycine cleavage system catalyzes the degradation of glycine. The chain is Probable aminomethyltransferase from Natronomonas pharaonis (strain ATCC 35678 / DSM 2160 / CIP 103997 / JCM 8858 / NBRC 14720 / NCIMB 2260 / Gabara) (Halobacterium pharaonis).